Consider the following 352-residue polypeptide: Spermidine/putrescine import ATP-binding protein PotA (352 aa).

One can recognise an ABC transporter domain in the interval 7–237 (IELKNVSKKY…PKNKFVANFI (231 aa)). An ATP-binding site is contributed by 39-46 (GPSGCGKT).

This sequence belongs to the ABC transporter superfamily. Spermidine/putrescine importer (TC 3.A.1.11.1) family. As to quaternary structure, the complex is composed of two ATP-binding proteins (PotA), two transmembrane proteins (PotB and PotC) and a solute-binding protein (PotD).

The protein localises to the cell membrane. It carries out the reaction ATP + H2O + polyamine-[polyamine-binding protein]Side 1 = ADP + phosphate + polyamineSide 2 + [polyamine-binding protein]Side 1.. In terms of biological role, part of the ABC transporter complex PotABCD involved in spermidine/putrescine import. Responsible for energy coupling to the transport system. The sequence is that of Spermidine/putrescine import ATP-binding protein PotA from Clostridium acetobutylicum (strain ATCC 824 / DSM 792 / JCM 1419 / IAM 19013 / LMG 5710 / NBRC 13948 / NRRL B-527 / VKM B-1787 / 2291 / W).